A 227-amino-acid chain; its full sequence is ATP-dependent Clp protease proteolytic subunit (227 aa).

Residue serine 123 is the Nucleophile of the active site. Histidine 148 is a catalytic residue.

Belongs to the peptidase S14 family. In terms of assembly, fourteen ClpP subunits assemble into 2 heptameric rings which stack back to back to give a disk-like structure with a central cavity, resembling the structure of eukaryotic proteasomes.

Its subcellular location is the cytoplasm. It carries out the reaction Hydrolysis of proteins to small peptides in the presence of ATP and magnesium. alpha-casein is the usual test substrate. In the absence of ATP, only oligopeptides shorter than five residues are hydrolyzed (such as succinyl-Leu-Tyr-|-NHMec, and Leu-Tyr-Leu-|-Tyr-Trp, in which cleavage of the -Tyr-|-Leu- and -Tyr-|-Trp bonds also occurs).. Its function is as follows. Cleaves peptides in various proteins in a process that requires ATP hydrolysis. Has a chymotrypsin-like activity. Plays a major role in the degradation of misfolded proteins. This chain is ATP-dependent Clp protease proteolytic subunit, found in Chlorobium phaeobacteroides (strain DSM 266 / SMG 266 / 2430).